The sequence spans 1036 residues: Lethal(2) giant larvae protein homolog 1 (1036 aa).

10 WD repeats span residues 38 to 71 (SALAFDPELRIMAIGTRSGAVKIYGAPGVEFTGL), 78 to 119 (VTQM…GLSF), 139 to 175 (VTVVLLVAGNTAALGTESGSIFFLDVATLALLEGQTL), 199 to 233 (SLQGHLQDPSKILIGYSRGLLVIWSQATQSVDNVF), 239 to 271 (LESLCWGRDGSSIISSHSDGSYAIWSTDTGSPP), 289 to 331 (AINK…ETLV), 339 to 373 (VIDFFTVHSTQPEDECDNPQALAVLLEEELVVLDL), 395 to 473 (TCSA…YKLS), 517 to 592 (QKVA…RMLI), and 601 to 662 (TAVT…LRQS). Residue Ser-662 is modified to Phosphoserine. Residues 667 to 677 (RKSRVSGKKRT) are compositionally biased toward basic residues. The segment at 667–688 (RKSRVSGKKRTPAASSKLQEAN) is disordered. Polar residues predominate over residues 679 to 688 (AASSKLQEAN). WD repeat units follow at residues 722–782 (VRCL…KEVQ), 791–843 (AIAV…VSAK), 848–901 (LTAH…VHYS), and 915–938 (VFTRHGQGFYLISPSEFERFSLSA). A Phosphothreonine modification is found at Thr-957. Phosphoserine occurs at positions 964, 982, and 989. The tract at residues 980–1002 (PESCEGSPSSAHSKRADTMEPPE) is disordered.

The protein belongs to the WD repeat L(2)GL family. In terms of assembly, associated with nonmuscle myosin II heavy chain. Interacts with PRKCI/aPKC, PARD6B/Par-6 and PARD6A. Interacts with STX4A. Interacts with RAB10 (GDP-bound form); the interaction is direct and promotes RAB10 association with membranes and activation through competition with the Rab inhibitor GDI1. Interacts with DCAF1. Post-translationally, phosphorylated by PRKCI on at least one of the following Ser residues: Ser 654, Ser-658, Ser-662, Ser-669 and Ser-672. Phosphorylation is important for appropriated cell polarization.

The protein localises to the early endosome membrane. Its subcellular location is the golgi apparatus. The protein resides in the trans-Golgi network membrane. It localises to the golgi apparatus membrane. It is found in the cell projection. The protein localises to the axon. Its subcellular location is the cytoplasm. The protein resides in the cytoskeleton. Functionally, cortical cytoskeleton protein found in a complex involved in maintaining cell polarity and epithelial integrity. Involved in the regulation of mitotic spindle orientation, proliferation, differentiation and tissue organization of neuroepithelial cells. Involved in axonogenesis through RAB10 activation thereby regulating vesicular membrane trafficking toward the axonal plasma membrane. This is Lethal(2) giant larvae protein homolog 1 (Llgl1) from Mus musculus (Mouse).